The following is a 512-amino-acid chain: Maturase K (512 aa).

This sequence belongs to the intron maturase 2 family. MatK subfamily.

Its subcellular location is the plastid. The protein localises to the chloroplast. Its function is as follows. Usually encoded in the trnK tRNA gene intron. Probably assists in splicing its own and other chloroplast group II introns. This Lilium regale (Regal lily) protein is Maturase K.